An 87-amino-acid chain; its full sequence is Small ribosomal subunit protein bS20 (87 aa).

The interval 1–22 (MANHKSALKRHKQSLKRAARNR) is disordered.

The protein belongs to the bacterial ribosomal protein bS20 family.

Functionally, binds directly to 16S ribosomal RNA. The polypeptide is Small ribosomal subunit protein bS20 (Nitratidesulfovibrio vulgaris (strain DP4) (Desulfovibrio vulgaris)).